We begin with the raw amino-acid sequence, 80 residues long: ATP synthase subunit c (80 aa).

2 consecutive transmembrane segments (helical) span residues 11–31 (MAAA…IGIL) and 53–73 (FFVV…LGLY).

This sequence belongs to the ATPase C chain family. F-type ATPases have 2 components, F(1) - the catalytic core - and F(0) - the membrane proton channel. F(1) has five subunits: alpha(3), beta(3), gamma(1), delta(1), epsilon(1). F(0) has three main subunits: a(1), b(2) and c(10-14). The alpha and beta chains form an alternating ring which encloses part of the gamma chain. F(1) is attached to F(0) by a central stalk formed by the gamma and epsilon chains, while a peripheral stalk is formed by the delta and b chains.

It localises to the cell inner membrane. F(1)F(0) ATP synthase produces ATP from ADP in the presence of a proton or sodium gradient. F-type ATPases consist of two structural domains, F(1) containing the extramembraneous catalytic core and F(0) containing the membrane proton channel, linked together by a central stalk and a peripheral stalk. During catalysis, ATP synthesis in the catalytic domain of F(1) is coupled via a rotary mechanism of the central stalk subunits to proton translocation. Functionally, key component of the F(0) channel; it plays a direct role in translocation across the membrane. A homomeric c-ring of between 10-14 subunits forms the central stalk rotor element with the F(1) delta and epsilon subunits. This is ATP synthase subunit c from Erwinia tasmaniensis (strain DSM 17950 / CFBP 7177 / CIP 109463 / NCPPB 4357 / Et1/99).